The primary structure comprises 587 residues: Formate--tetrahydrofolate ligase (587 aa).

73–80 (TPLGEGKS) serves as a coordination point for ATP.

This sequence belongs to the formate--tetrahydrofolate ligase family.

The catalysed reaction is (6S)-5,6,7,8-tetrahydrofolate + formate + ATP = (6R)-10-formyltetrahydrofolate + ADP + phosphate. It functions in the pathway one-carbon metabolism; tetrahydrofolate interconversion. The protein is Formate--tetrahydrofolate ligase of Desulfosudis oleivorans (strain DSM 6200 / JCM 39069 / Hxd3) (Desulfococcus oleovorans).